The chain runs to 384 residues: D-galactosamine-6-phosphate deaminase AgaS (384 aa).

SIS domains follow at residues leucine 45 to phenylalanine 197 and serine 215 to proline 364.

Belongs to the SIS family. AgaS subfamily.

The enzyme catalyses D-galactosamine 6-phosphate + H2O = D-tagatopyranose 1-phosphate + NH4(+). Catalyzes the isomerization-deamination of galactosamine 6-phosphate to form tagatofuranose 6-phosphate and ammonium ion. This Escherichia coli O157:H7 protein is D-galactosamine-6-phosphate deaminase AgaS.